Here is a 259-residue protein sequence, read N- to C-terminus: Phosphatidylglycerol--prolipoprotein diacylglyceryl transferase (259 aa).

The next 4 membrane-spanning stretches (helical) occupy residues 16–36, 55–75, 92–112, and 117–137; these read FAISWYSLSYVIGILLGWFYA, FITYAVIGIIVGGRLGFVLLY, QGGMSFHGGALGVIIAAYLFC, and VNFLSLTDIIATVVPIGLFLG. Residue Arg-138 participates in a 1,2-diacyl-sn-glycero-3-phospho-(1'-sn-glycerol) binding. 3 helical membrane passes run 172-192, 201-221, and 228-248; these read QLYEAFFEGLVLFCILAYATF, ALNLGLFLTFYALFRITIEIF, and IGFILDSLTMGQILSIPMLIL.

This sequence belongs to the Lgt family.

Its subcellular location is the cell inner membrane. The enzyme catalyses L-cysteinyl-[prolipoprotein] + a 1,2-diacyl-sn-glycero-3-phospho-(1'-sn-glycerol) = an S-1,2-diacyl-sn-glyceryl-L-cysteinyl-[prolipoprotein] + sn-glycerol 1-phosphate + H(+). Its pathway is protein modification; lipoprotein biosynthesis (diacylglyceryl transfer). Catalyzes the transfer of the diacylglyceryl group from phosphatidylglycerol to the sulfhydryl group of the N-terminal cysteine of a prolipoprotein, the first step in the formation of mature lipoproteins. This Rickettsia canadensis (strain McKiel) protein is Phosphatidylglycerol--prolipoprotein diacylglyceryl transferase.